A 376-amino-acid polypeptide reads, in one-letter code: Pulmonary surfactant-associated protein B (376 aa).

The signal sequence occupies residues 1–24 (MAKLHLQWLLLLPTLCSLGAATES). Residues 25–63 (ASSPDCAQGPKFWCQSLEQAIQCRALGHCLQEVWGHAGA) form the Saposin A-type domain. A propeptide spanning residues 25–190 (ASSPDCAQGP…PHTQDLSEQQ (166 aa)) is cleaved from the precursor. 3 consecutive Saposin B-type domains span residues 63–145 (ANDL…PLGQ), 194–271 (PLPF…STAD), and 290–365 (QDTE…EAPA). Disulfide bonds link Cys67–Cys141, Cys70–Cys135, Cys98–Cys110, Cys198–Cys267, Cys201–Cys261, Cys225–Cys236, Cys294–Cys361, Cys297–Cys355, and Cys320–Cys330. A propeptide spanning residues 270-376 (ADAIGPALPA…PLQCFQTPHL (107 aa)) is cleaved from the precursor. Asn306 is a glycosylation site (N-linked (GlcNAc...) asparagine).

In terms of assembly, homodimer; disulfide-linked.

It localises to the secreted. Its subcellular location is the extracellular space. It is found in the surface film. In terms of biological role, pulmonary surfactant-associated proteins promote alveolar stability by lowering the surface tension at the air-liquid interface in the peripheral air spaces. SP-B increases the collapse pressure of palmitic acid to nearly 70 millinewtons per meter. This Rattus norvegicus (Rat) protein is Pulmonary surfactant-associated protein B (Sftpb).